Reading from the N-terminus, the 224-residue chain is Claudin-19 (224 aa).

Over 1 to 7 the chain is Cytoplasmic; sequence MANSGLQ. A helical transmembrane segment spans residues 8 to 28; it reads LLGYFLALGGWVGIIASTALP. Over 29–81 the chain is Extracellular; it reads QWKQSSYAGDAIITAVGLYEGLWMSCASQSTGQVQCKLYDSLLALDGHIQSAR. C54 and C64 are oxidised to a cystine. The helical transmembrane segment at 82 to 102 threads the bilayer; it reads ALMVVAVLLGFVAMVLSVVGM. At 103–117 the chain is on the cytoplasmic side; it reads KCTRVGDSNPTAKGR. Residues 118-138 form a helical membrane-spanning segment; that stretch reads VAISGGALFLLAGLCTLTAVS. Residues 139 to 160 lie on the Extracellular side of the membrane; it reads WYATLVTQEFFNPSTPVNARYE. The helical transmembrane segment at 161–181 threads the bilayer; the sequence is FGPALFVGWASAGLAILGGSF. Residues 182–224 lie on the Cytoplasmic side of the membrane; it reads LCCTCPEPERANSIPQPYRSGPSTAAREPVVKLSTSVKGPLGV.

The protein belongs to the claudin family. In terms of assembly, can form homo- and heteropolymeric tight junction strands. Interacts with other claudins including CLDN3, CLDN10, CLDN16 and CLDN18 with highest affinity for CLDN16. Interacts (via PDZ-binding motif TRV) with TJP1 (via PDZ domain).

The protein resides in the cell junction. It is found in the tight junction. It localises to the cell membrane. The enzyme catalyses Mg(2+)(in) = Mg(2+)(out). It carries out the reaction Ca(2+)(in) = Ca(2+)(out). It catalyses the reaction Na(+)(in) = Na(+)(out). The catalysed reaction is K(+)(in) = K(+)(out). The enzyme catalyses Rb(+)(in) = Rb(+)(out). It carries out the reaction Cs(+)(in) = Cs(+)(out). It catalyses the reaction Li(+)(in) = Li(+)(out). In terms of biological role, forms paracellular channels: coassembles with CLDN16 into tight junction strands with cation-selective channels through the strands, conveying epithelial permeability in a process known as paracellular tight junction permeability. Involved in the maintenance of ion gradients along the nephron. In the thick ascending limb (TAL) of Henle's loop, facilitates sodium paracellular permeability from the interstitial compartment to the lumen, contributing to the lumen-positive transepithelial potential that drives paracellular magnesium and calcium reabsorption. Forms paracellular barriers on its own. In the peripheral nervous system, represents a major constituent of the tight junctions in Schwann cells and contributes to electrical sealing. During retinal neurogenesis, may regulate the barrier properties of tight junctions in retinal pigment epithelium, required for proper retinal tissue differentiation and vision. In Rattus norvegicus (Rat), this protein is Claudin-19.